The following is a 294-amino-acid chain: Putative glucose-6-phosphate 1-epimerase (294 aa).

Substrate is bound by residues R74 and R99. Residue H164 is part of the active site. D208 serves as a coordination point for substrate. E267 is a catalytic residue.

The protein belongs to the glucose-6-phosphate 1-epimerase family. In terms of assembly, monomer in solution.

The enzyme catalyses alpha-D-glucose 6-phosphate = beta-D-glucose 6-phosphate. Its function is as follows. Probably functions as a hexose-6-phosphate 1-epimerase. In Salmonella typhimurium (strain LT2 / SGSC1412 / ATCC 700720), this protein is Putative glucose-6-phosphate 1-epimerase.